We begin with the raw amino-acid sequence, 349 residues long: Protein-glutamate methylesterase/protein-glutamine glutaminase 2 (349 aa).

In terms of domain architecture, Response regulatory spans 4–121 (SVLVVDDSAL…AEGMQAYAEE (118 aa)). A 4-aspartylphosphate modification is found at Asp55. Residues 151–343 (LLSTEKIIAL…AALLQQAARR (193 aa)) form the CheB-type methylesterase domain. Residues Ser163, His189, and Asp285 contribute to the active site.

It belongs to the CheB family. Interacts with the C-terminal pentapeptide GWEEF of McpB. Post-translationally, phosphorylated by CheA. Phosphorylation of the N-terminal regulatory domain activates the methylesterase activity.

It localises to the cytoplasm. It catalyses the reaction [protein]-L-glutamate 5-O-methyl ester + H2O = L-glutamyl-[protein] + methanol + H(+). The enzyme catalyses L-glutaminyl-[protein] + H2O = L-glutamyl-[protein] + NH4(+). Its function is as follows. Involved in chemotaxis. Part of a chemotaxis signal transduction system that modulates chemotaxis in response to various stimuli. Catalyzes the demethylation of specific methylglutamate residues introduced into the chemoreceptors (methyl-accepting chemotaxis proteins or MCP) by CheR. Also mediates the irreversible deamidation of specific glutamine residues to glutamic acid. Acts on the methyl-accepting chemotaxis protein McpB. May be involved in a specific chemotactic response, which takes place during infection and is required for P.aeruginosa pathogenicity. This chain is Protein-glutamate methylesterase/protein-glutamine glutaminase 2, found in Pseudomonas aeruginosa (strain ATCC 15692 / DSM 22644 / CIP 104116 / JCM 14847 / LMG 12228 / 1C / PRS 101 / PAO1).